Reading from the N-terminus, the 331-residue chain is PDZ and LIM domain protein 4 (331 aa).

Residues 1–84 (MPHSVTLRGP…HLTLSVSRPE (84 aa)) enclose the PDZ domain. 3 disordered regions span residues 80-99 (VSRPEGRSWPSTPEDNKAQA), 105-152 (DSEA…GSNS), and 221-243 (AGEGGERPGPGGPRNLKPTASKL). Phosphoserine is present on residues Ser-112, Ser-116, Ser-120, and Ser-135. Residues 254 to 313 (PECTRCGHGIVGTIVKARDKLYHPECFMCSDCGLNLKQRGYFFLDERLYCESHAKARVKP) enclose the LIM zinc-binding domain.

In terms of assembly, homodimer. Interacts (via C-terminus only or via combined C-terminus and LIM domain, but not LIM domain only) with PTPN13 (via the second or fourth PDZ domains). Found in a complex with PTPN13 and TRIP6. Interacts (via PDZ domain) with ACTN1 and ACTN2 (via C-terminal SDL residues). Interacts (via PDZ domain) with TRIP6 (via the second LIM domain or via the third LIM domain plus C-terminus). Interacts (via LIM domain) with GRIA1 (via C-terminus); this interaction as well as the interaction with alpha-actinin is required for their colocalization in early endosomes. Interacts with PDLIM1. Forms (via LIM domain) a heterodimer with PDLIM3. Interacts directly with SRC (via kinase domain and to a lesser extent the SH2 domain). Post-translationally, phosphorylated on tyrosine residue(s). Can be dephosphorylated by PTPN13.

The protein resides in the cytoplasm. The protein localises to the cytoskeleton. It localises to the cell projection. It is found in the dendritic spine. Its subcellular location is the early endosome membrane. The protein resides in the recycling endosome membrane. The protein localises to the nucleus. It localises to the perinuclear region. It is found in the lamellipodium. Its subcellular location is the synapse. The protein resides in the synaptosome. Functionally, suppresses SRC activation by recognizing and binding to active SRC and facilitating PTPN13-mediated dephosphorylation of SRC 'Tyr-419' leading to its inactivation. Inactivated SRC dissociates from this protein allowing the initiation of a new SRC inactivation cycle. Involved in reorganization of the actin cytoskeleton. In nonmuscle cells, binds to ACTN1 (alpha-actinin-1), increases the affinity of ACTN1 to F-actin (filamentous actin), and promotes formation of actin stress fibers. Involved in regulation of the synaptic AMPA receptor transport in dendritic spines of hippocampal pyramidal neurons directing the receptors toward an insertion at the postsynaptic membrane. Links endosomal surface-internalized GRIA1-containing AMPA receptors to the alpha-actinin/actin cytoskeleton. Increases AMPA receptor-mediated excitatory postsynaptic currents in neurons. This chain is PDZ and LIM domain protein 4 (PDLIM4), found in Bos taurus (Bovine).